Here is a 209-residue protein sequence, read N- to C-terminus: Guanylate kinase (209 aa).

Positions 16–198 (GRLVIISGPS…AVTEICQILL (183 aa)) constitute a Guanylate kinase-like domain. ATP is bound at residue 23-30 (GPSGAGKS).

The protein belongs to the guanylate kinase family.

The protein localises to the cytoplasm. The catalysed reaction is GMP + ATP = GDP + ADP. Its function is as follows. Essential for recycling GMP and indirectly, cGMP. The chain is Guanylate kinase from Rhodopirellula baltica (strain DSM 10527 / NCIMB 13988 / SH1).